The chain runs to 1004 residues: 2-oxoglutarate dehydrogenase E1 component (1004 aa).

It belongs to the alpha-ketoglutarate dehydrogenase family. In terms of assembly, homodimer. Part of the 2-oxoglutarate dehydrogenase (OGDH) complex composed of E1 (2-oxoglutarate dehydrogenase), E2 (dihydrolipoamide succinyltransferase) and E3 (dihydrolipoamide dehydrogenase); the complex contains multiple copies of the three enzymatic components (E1, E2 and E3). Thiamine diphosphate is required as a cofactor.

It carries out the reaction N(6)-[(R)-lipoyl]-L-lysyl-[protein] + 2-oxoglutarate + H(+) = N(6)-[(R)-S(8)-succinyldihydrolipoyl]-L-lysyl-[protein] + CO2. In terms of biological role, E1 component of the 2-oxoglutarate dehydrogenase (OGDH) complex which catalyzes the decarboxylation of 2-oxoglutarate, the first step in the conversion of 2-oxoglutarate to succinyl-CoA and CO(2). In Brucella abortus (strain S19), this protein is 2-oxoglutarate dehydrogenase E1 component.